The primary structure comprises 219 residues: Oligoribonuclease (219 aa).

An Exonuclease domain is found at 19–184 (LVWVDLEMTG…ADIVESIREL (166 aa)). Tyr-141 is a catalytic residue.

It belongs to the oligoribonuclease family.

The protein localises to the cytoplasm. Functionally, 3'-to-5' exoribonuclease specific for small oligoribonucleotides. The chain is Oligoribonuclease from Corynebacterium glutamicum (strain R).